The chain runs to 493 residues: Cysteine--tRNA ligase (493 aa).

A Zn(2+)-binding site is contributed by C29. The 'HIGH' region signature appears at 31–41; sequence VTVYDLCHLGH. Zn(2+) is bound by residues C213, H238, and E242. The 'KMSKS' region motif lies at 270 to 274; sequence KMSKS. K273 provides a ligand contact to ATP.

This sequence belongs to the class-I aminoacyl-tRNA synthetase family. As to quaternary structure, monomer. Zn(2+) is required as a cofactor.

Its subcellular location is the cytoplasm. The enzyme catalyses tRNA(Cys) + L-cysteine + ATP = L-cysteinyl-tRNA(Cys) + AMP + diphosphate. The polypeptide is Cysteine--tRNA ligase (Parasynechococcus marenigrum (strain WH8102)).